We begin with the raw amino-acid sequence, 362 residues long: mRNA decay activator protein ZFP36L2 (362 aa).

Residues 100–109 (SFSENGERSQ) show a composition bias toward basic and acidic residues. Residues 100-126 (SFSENGERSQHLLHLQQQQQQKAGAQV) form a disordered region. Residues 111–120 (LLHLQQQQQQ) are compositionally biased toward low complexity. The RNA-binding signature appears at 130–135 (RYKTEL). C3H1-type zinc fingers lie at residues 130 to 158 (RYKT…HGFH) and 168 to 196 (KYKT…HNAE). Residues 147-188 (YGEKCQFAHGFHELRSLTRHPKYKTELCRTFHTIGFCPYGPR) are RNA-binding. Disordered stretches follow at residues 225 to 244 (DSPL…SSSS) and 306 to 362 (SESP…ISDD). A compositionally biased stretch (low complexity) spans 327–346 (YLSGSLSSGSLSGSDSPTLD).

In terms of processing, phosphorylated.

It localises to the nucleus. It is found in the cytoplasm. In terms of biological role, zinc-finger RNA-binding protein that destabilizes several cytoplasmic AU-rich element (ARE)-containing mRNA transcripts by promoting their poly(A) tail removal or deadenylation, and hence provide a mechanism for attenuating protein synthesis. Acts as a 3'-untranslated region (UTR) ARE mRNA-binding adapter protein to communicate signaling events to the mRNA decay machinery. Functions by recruiting the CCR4-NOT deadenylase complex and probably other components of the cytoplasmic RNA decay machinery to the bound ARE-containing mRNAs, and hence promotes ARE-mediated mRNA deadenylation and decay processes. Binds to 3'-UTR ARE of numerous mRNAs. Also induces the degradation of ARE-containing mRNAs even in absence of poly(A) tail. Required for tubulogenesis during pronephros development. The chain is mRNA decay activator protein ZFP36L2 (zfp36l2) from Xenopus tropicalis (Western clawed frog).